An 844-amino-acid polypeptide reads, in one-letter code: Probable inorganic carbon transporter subunit DabA 1 (844 aa).

Zn(2+)-binding residues include cysteine 359, aspartate 361, histidine 543, and cysteine 558.

This sequence belongs to the inorganic carbon transporter (TC 9.A.2) DabA family. Forms a complex with DabB. Requires Zn(2+) as cofactor.

The protein resides in the cell inner membrane. Part of an energy-coupled inorganic carbon pump. The chain is Probable inorganic carbon transporter subunit DabA 1 from Bradyrhizobium sp. (strain BTAi1 / ATCC BAA-1182).